The primary structure comprises 887 residues: MGNSNTKESRAGDGSSRAHHGDPGSASLQSDRVSSRRNRVSRGDLGGILGLGTGASQSEPPYERRETKQEREARRLERERVARIAERERSMKEEHVDGGYLVTMGTYTSPEDFNKPIVRQLQIERKVAPFWRGLNDFDDQWTEPQIIAAARGLPVPPADQIPPEDLIPRPLPANPRTEGSSNLDNLTIPITGRSPSTASEHASSNPGSALPSPVSAQAPRANSPFKPRGKAIAAVLGGGGSRNGSTTELMPREINLPHDPFVNGQPLEVFLYKNATECPICFLTFPPYLNHTRCCDQPICSECFVQIKRPDPHFPEGHNENDPNHNPEETAGLLVSEPACCPYCTQPDFGVTYEPPPFRRGLSYSISLTAVGAASAAMSSSSSVNSASLSPTNASPSNGTGRRRNQSVSASSPSVILTDRIRPEWATKLQAARAHLARRAAAATALHTAAFIVGGSENRAFRSRFGRRNNGGSGSALPSPGGVNHGEGENGDSGSGTPSQNDMDQNSRGDPGRGRSGGNHRDRLEDLEEMMLAEAVRLSLAAEEERKRKVSKEERKEAKKREKEERKAAKAAAKQVGPYEGASGRSGHSSASGSTLSLPGFGFGRKRGNSAASNLRIEASVASAIATTESPEANPKEKGKGVDRAVSTHAEGAPATATDPAVLGGSASTSSPRPVPHLPAGPSHLRQMSNASSVTSSILDSRHGSYTSPTHLQDPRSSGLSLGSRSGASEDGGDADRDRDPCASTEPMFNFRSLAQVVGVSLDGENAGRRLSLIEAERRARESGETGSQDSADFGEVETIKTDTATDHADVKPQAEASGSLSVDTAMGRHIKGSPIAQNGSGEVESDSLSPPTVTITLETPATASANDELKQLGSEAAVEPVHRLTE.

Disordered regions lie at residues 1-77 (MGNS…RRLE), 168-226 (PRPL…SPFK), 381-415 (SSSV…SPSV), 463-521 (SRFG…GNHR), 542-608 (AEEE…RKRG), 623-746 (SAIA…ASTE), and 778-854 (RRAR…PPTV). Over residues 44 to 53 (DLGGILGLGT) the composition is skewed to gly residues. A compositionally biased stretch (basic and acidic residues) spans 61–77 (PYERRETKQEREARRLE). The span at 193–207 (RSPSTASEHASSNPG) shows a compositional bias: polar residues. Over residues 381-390 (SSSVNSASLS) the composition is skewed to low complexity. 2 stretches are compositionally biased toward polar residues: residues 391–415 (PTNA…SPSV) and 495–504 (SGTPSQNDMD). Basic and acidic residues-rich tracts occupy residues 505–521 (QNSR…GNHR) and 543–568 (EEER…ERKA). Residues 581–600 (GASGRSGHSSASGSTLSLPG) are compositionally biased toward low complexity. Positions 634–643 (NPKEKGKGVD) are enriched in basic and acidic residues. Positions 686 to 711 (RQMSNASSVTSSILDSRHGSYTSPTH) are enriched in polar residues. The span at 716–727 (RSSGLSLGSRSG) shows a compositional bias: low complexity. Over residues 798-813 (ETIKTDTATDHADVKP) the composition is skewed to basic and acidic residues. A compositionally biased stretch (polar residues) spans 836-854 (IAQNGSGEVESDSLSPPTV).

The protein belongs to the SIP5 family.

The protein localises to the cytoplasm. Functionally, may negatively regulate the SNF1 kinase. This Chaetomium globosum (strain ATCC 6205 / CBS 148.51 / DSM 1962 / NBRC 6347 / NRRL 1970) (Soil fungus) protein is Protein SIP5 (SIP5).